Reading from the N-terminus, the 173-residue chain is Alpha-crystallin A chain (173 aa).

N-acetylmethionine is present on Met-1. The segment at Met-1–Glu-63 is required for complex formation with BFSP1 and BFSP2. Gln-6 carries the deamidated glutamine; partial modification. Ser-45 bears the Phosphoserine mark. Gln-50 is subject to Deamidated glutamine; partial. In terms of domain architecture, sHSP spans Leu-52–Ser-162. Lys-70 is modified (N6-acetyllysine). His-79 is a binding site for Zn(2+). Gln-90 carries the deamidated glutamine; partial modification. N6-acetyllysine is present on Lys-99. Position 100 (His-100) interacts with Zn(2+). Deamidated asparagine; partial is present on Asn-101. Glu-102 and His-107 together coordinate Zn(2+). Ser-122 is modified (phosphoserine). Residue Asn-123 is modified to Deamidated asparagine; partial. The tract at residues Pro-144–Ser-173 is disordered. Basic and acidic residues predominate over residues Gly-153–Pro-167. His-154 serves as a coordination point for Zn(2+). O-linked (GlcNAc) serine glycosylation occurs at Ser-162.

It belongs to the small heat shock protein (HSP20) family. As to quaternary structure, heteromer composed of three CRYAA and one CRYAB subunits. Inter-subunit bridging via zinc ions enhances stability, which is crucial as there is no protein turn over in the lens. Can also form homodimers and homotetramers (dimers of dimers) which serve as the building blocks of homooligomers. Within homooligomers, the zinc-binding motif is created from residues of 3 different molecules. His-100 and Glu-102 from one molecule are ligands of the zinc ion, and His-107 and His-154 residues from additional molecules complete the site with tetrahedral coordination geometry. Part of a complex required for lens intermediate filament formation composed of BFSP1, BFSP2 and CRYAA. In terms of processing, acetylation at Lys-70 may increase chaperone activity. Post-translationally, undergoes age-dependent proteolytical cleavage at the C-terminus.

The protein localises to the cytoplasm. It is found in the nucleus. Functionally, contributes to the transparency and refractive index of the lens. Acts as a chaperone, preventing aggregation of various proteins under a wide range of stress conditions. Required for the correct formation of lens intermediate filaments as part of a complex composed of BFSP1, BFSP2 and CRYAA. The protein is Alpha-crystallin A chain (CRYAA) of Sus scrofa (Pig).